Here is a 407-residue protein sequence, read N- to C-terminus: Aurora kinase A-A (407 aa).

Basic and acidic residues predominate over residues 1–10 (MERAVKENHK). Positions 1–130 (MERAVKENHK…KTSAVPKEEG (130 aa)) are disordered. 2 stretches are compositionally biased toward polar residues: residues 67–77 (ILSSQKPTTQI) and 84–110 (QGHQ…STPN). Residues 140–390 (FEIGRPLGKG…LKGVLEHPWI (251 aa)) enclose the Protein kinase domain. ATP is bound by residues lysine 150, lysine 169, and 217–220 (LDYA). Aspartate 263 (proton acceptor) is an active-site residue. Residue aspartate 281 coordinates ATP. The segment at 287–300 (HAPSSRRTTLCGTL) is activation segment.

This sequence belongs to the protein kinase superfamily. Ser/Thr protein kinase family. Aurora subfamily. As to quaternary structure, interacts with kif2c and kif11. In terms of processing, phosphorylated. Autophosphorylated on a serine residue. In terms of tissue distribution, highly expressed in ovary and testis.

Its subcellular location is the cytoplasm. The protein resides in the cytoskeleton. It localises to the spindle. It is found in the microtubule organizing center. The protein localises to the centrosome. The enzyme catalyses L-seryl-[protein] + ATP = O-phospho-L-seryl-[protein] + ADP + H(+). The catalysed reaction is L-threonyl-[protein] + ATP = O-phospho-L-threonyl-[protein] + ADP + H(+). Mitotic serine/threonine kinases that contributes to the regulation of cell cycle progression. Associates with the centrosome and the spindle microtubules during mitosis and plays a critical role in various mitotic events including the establishment of mitotic spindle, centrosome duplication, centrosome separation as well as maturation, chromosomal alignment, spindle assembly checkpoint, and cytokinesis. Phosphorylates numerous target proteins. Important for microtubule formation and/or stabilization. This chain is Aurora kinase A-A (aurka-a), found in Xenopus laevis (African clawed frog).